A 404-amino-acid polypeptide reads, in one-letter code: tRNA pseudouridine(31) synthase (404 aa).

Residue D168 is part of the active site.

It belongs to the pseudouridine synthase RluA family.

The protein localises to the cytoplasm. It is found in the mitochondrion. The catalysed reaction is uridine(31) in tRNA = pseudouridine(31) in tRNA. Its function is as follows. Catalyzes the formation of pseudouridine at position 31 in the psi GC loop of tRNAS. In Saccharomyces cerevisiae (strain ATCC 204508 / S288c) (Baker's yeast), this protein is tRNA pseudouridine(31) synthase (PUS6).